The following is a 567-amino-acid chain: Potassium-transporting ATPase potassium-binding subunit (567 aa).

The next 11 helical transmembrane spans lie at 3–23, 64–84, 136–156, 179–199, 254–274, 285–305, 330–350, 357–376, 421–441, 473–495, and 527–547; these read FIGWCQIALFGAVVVALVKPL, LTFTLAMLLFHIGGFAIIYAV, ALTHQNFLSAATGIVLAMALI, LYVLLPICIPYALFLVWQGMP, LSNFVQMLSIFVLGAALTNVF, WAILGVMGVLFVVGIAVAYWA, FGIVASALFAVVTTAASCGAV, FTALGGMIPLINMQLGEIIV, MLAILVLPLMYLGWTAIAVVL, AFGGLTGNTFFYNLTLATAMFVG, and GGLFVGLVVGVILIIGGLTFF.

Belongs to the KdpA family. The system is composed of three essential subunits: KdpA, KdpB and KdpC.

Its subcellular location is the cell inner membrane. Part of the high-affinity ATP-driven potassium transport (or Kdp) system, which catalyzes the hydrolysis of ATP coupled with the electrogenic transport of potassium into the cytoplasm. This subunit binds the periplasmic potassium ions and delivers the ions to the membrane domain of KdpB through an intramembrane tunnel. The sequence is that of Potassium-transporting ATPase potassium-binding subunit from Rhodopseudomonas palustris (strain ATCC BAA-98 / CGA009).